A 408-amino-acid polypeptide reads, in one-letter code: RUN domain-containing protein 3B (408 aa).

The tract at residues 1–25 (MASRSLGGLSGSRGGGGGGGGKKSL) is disordered. Residues 8–22 (GLSGSRGGGGGGGGK) are compositionally biased toward gly residues. Omega-N-methylarginine is present on Arg13. One can recognise an RUN domain in the interval 58–190 (DDSSPEFNNF…IDFSFCLKGE (133 aa)). The tract at residues 213–238 (DSISSDEEELRTFGSSDSESSTPENV) is disordered. Phosphoserine occurs at positions 216 and 217. Positions 225–236 (FGSSDSESSTPE) are enriched in polar residues. Residues 301–326 (AHKLEKEQLEYIIVELQDQLKSYQSL) adopt a coiled-coil conformation. A disordered region spans residues 337–359 (QASLDPSHSQEGDGKQDSLNFIG).

Belongs to the RUNDC3 family. As to quaternary structure, interacts with RAP2A.

This Mus musculus (Mouse) protein is RUN domain-containing protein 3B (Rundc3b).